A 245-amino-acid polypeptide reads, in one-letter code: Phosducin (245 aa).

A disordered region spans residues 1–70 (MEKAKSQSLE…DKDSKERFSR (70 aa)). The Phosducin domain maps to 1 to 244 (MEKAKSQSLE…LEQTNMEEDM (244 aa)). 2 stretches are compositionally biased toward basic and acidic residues: residues 28-50 (DWRK…KEIL) and 58-69 (SRDDKDSKERFS). Serine 73 is subject to Phosphoserine; by PKA. The tract at residues 111–245 (YGFVYELESG…EQTNMEEDME (135 aa)) is thioredoxin fold.

This sequence belongs to the phosducin family. In terms of assembly, interacts with CRX. Forms a complex with the beta and gamma subunits of the GTP-binding protein, transducin. In terms of processing, light-induced changes in cyclic nucleotide levels modulate the phosphorylation of this protein by cAMP kinase.

Its subcellular location is the cytoplasm. The protein resides in the cytosol. It is found in the nucleus. The protein localises to the cell projection. It localises to the cilium. Its subcellular location is the photoreceptor outer segment. The protein resides in the photoreceptor inner segment. Its function is as follows. Inhibits the transcriptional activation activity of the cone-rod homeobox CRX. May participate in the regulation of visual phototransduction or in the integration of photoreceptor metabolism. This chain is Phosducin (PDC), found in Bos taurus (Bovine).